The primary structure comprises 349 residues: Dihydroorotate dehydrogenase (quinone) (349 aa).

FMN is bound by residues 65 to 69 and alanine 89; that span reads AGFDK. A substrate-binding site is contributed by lysine 69. 114–118 contributes to the substrate binding site; the sequence is NRMGF. Residues asparagine 143 and asparagine 176 each coordinate FMN. A substrate-binding site is contributed by asparagine 176. Serine 179 (nucleophile) is an active-site residue. Asparagine 181 lines the substrate pocket. Residues lysine 212 and threonine 240 each contribute to the FMN site. Position 241-242 (241-242) interacts with substrate; the sequence is NT. The segment at 244–265 is disordered; that stretch reads TERPESLSHPHAGEQGGLSGAP. Basic and acidic residues predominate over residues 245 to 255; that stretch reads ERPESLSHPHA. FMN is bound by residues glycine 263, glycine 290, and 311 to 312; that span reads YT.

Belongs to the dihydroorotate dehydrogenase family. Type 2 subfamily. Monomer. It depends on FMN as a cofactor.

Its subcellular location is the cell membrane. The catalysed reaction is (S)-dihydroorotate + a quinone = orotate + a quinol. It functions in the pathway pyrimidine metabolism; UMP biosynthesis via de novo pathway; orotate from (S)-dihydroorotate (quinone route): step 1/1. Its function is as follows. Catalyzes the conversion of dihydroorotate to orotate with quinone as electron acceptor. The polypeptide is Dihydroorotate dehydrogenase (quinone) (Halobacterium salinarum (strain ATCC 29341 / DSM 671 / R1)).